Consider the following 123-residue polypeptide: Protein Wnt-3a (123 aa).

S1 carries O-palmitoleoyl serine lipidation. A disulfide bond links C89 and C104. The N-linked (GlcNAc...) asparagine glycan is linked to N90.

It belongs to the Wnt family. Disulfide bonds have critical and distinct roles in secretion and activity. Loss of each conserved cysteine results in high molecular weight oxidized Wnt oligomers, which are formed through inter-Wnt disulfide bonding. In terms of processing, palmitoleoylation is required for efficient binding to frizzled receptors. Depalmitoleoylation leads to Wnt signaling pathway inhibition.

It localises to the secreted. It is found in the extracellular space. The protein resides in the extracellular matrix. Ligand for members of the frizzled family of seven transmembrane receptors. Functions in the canonical Wnt signaling pathway that results in activation of transcription factors of the TCF/LEF family. Required for normal embryonic mesoderm development and formation of caudal somites. Required for normal morphogenesis of the developing neural tube. The chain is Protein Wnt-3a (WNT3A) from Meleagris gallopavo (Wild turkey).